Reading from the N-terminus, the 196-residue chain is Peroxisome assembly protein 22 (196 aa).

A helical transmembrane segment spans residues Leu15–Ile37.

It belongs to the peroxin-22 family.

The protein localises to the peroxisome membrane. In terms of biological role, involved in peroxisome biogenesis. The chain is Peroxisome assembly protein 22 (PEX22) from Debaryomyces hansenii (strain ATCC 36239 / CBS 767 / BCRC 21394 / JCM 1990 / NBRC 0083 / IGC 2968) (Yeast).